A 392-amino-acid polypeptide reads, in one-letter code: 8-amino-7-oxononanoate synthase (392 aa).

Position 21 (R21) interacts with substrate. 114 to 115 (GY) provides a ligand contact to pyridoxal 5'-phosphate. Substrate is bound at residue H139. Residues S187, 212-215 (DEAH), and 243-246 (TFGK) each bind pyridoxal 5'-phosphate. K246 is modified (N6-(pyridoxal phosphate)lysine). T359 lines the substrate pocket.

This sequence belongs to the class-II pyridoxal-phosphate-dependent aminotransferase family. BioF subfamily. As to quaternary structure, homodimer. The cofactor is pyridoxal 5'-phosphate.

The catalysed reaction is 6-carboxyhexanoyl-[ACP] + L-alanine + H(+) = (8S)-8-amino-7-oxononanoate + holo-[ACP] + CO2. It functions in the pathway cofactor biosynthesis; biotin biosynthesis. Its function is as follows. Catalyzes the decarboxylative condensation of pimeloyl-[acyl-carrier protein] and L-alanine to produce 8-amino-7-oxononanoate (AON), [acyl-carrier protein], and carbon dioxide. In Chlorobaculum parvum (strain DSM 263 / NCIMB 8327) (Chlorobium vibrioforme subsp. thiosulfatophilum), this protein is 8-amino-7-oxononanoate synthase.